The following is a 204-amino-acid chain: MTSVWKTKVLTGLNKLFDKDGKKAAAAEFLKSFNKEEIGKEIDDKKTELEPKVVEVVESSPPEIKALLKDKKTASKIKKNGPAVTKFLEELAKIDFPGAKPVSDAVAKSGTTPLSPAIAFILEKVAPFVPKEEPKPEPEAEAAAETTSREVAVEEEKKEEEAAPAEPAAAAAEAAAPSTEVVEEKKEEEKPAEAAAPAAEPEKQ.

The tract at residues 128–204 is disordered; sequence FVPKEEPKPE…AAPAAEPEKQ (77 aa). Positions 147–161 are enriched in basic and acidic residues; that stretch reads TSREVAVEEEKKEEE. Residues 164–180 are compositionally biased toward low complexity; it reads PAEPAAAAAEAAAPSTE. The segment covering 182–192 has biased composition (basic and acidic residues); the sequence is VEEKKEEEKPA. The span at 193–204 shows a compositional bias: low complexity; sequence EAAAPAAEPEKQ.

Belongs to the DREPP family.

This is Salt stress root protein RS1 from Oryza sativa subsp. indica (Rice).